We begin with the raw amino-acid sequence, 1262 residues long: SCL-interrupting locus protein homolog (1262 aa).

The segment at 1 to 992 is interaction with RBM14; the sequence is MNTRFPSSKM…IDSPTKVKKN (992 aa). Residues 220–762 are interaction with CPAP; the sequence is YKHGYITMDE…VSMEAQSSPG (543 aa). 3 disordered regions span residues 369 to 409, 454 to 551, and 650 to 670; these read RSSQ…QKIS, LCDA…LAPQ, and GGMGAYSPHSNGEPSPVAGPS. 3 stretches are compositionally biased toward polar residues: residues 473-493, 500-512, and 540-551; these read PTNQLSQDTALRQSRGKQSST, QFRNTNAKPSLSV, and TLDSRQPSLAPQ. The interval 567-760 is PIN1-binding; it reads PMELQVPTPS…ELVSMEAQSS (194 aa). Phosphoserine occurs at positions 733 and 760. Disordered stretches follow at residues 782–804, 883–904, 925–959, and 1106–1129; these read NAAGDDQEPDSQPKQDDTKISSE, APTEGASNSTELPQGTKDEPYR, NASQETEEPPTKAVVTNRECAKTQNTHHARKKRHN, and SSDNSEDEEEPPSHADSESDHVLN. Basic and acidic residues predominate over residues 792 to 803; sequence SQPKQDDTKISS. Residues 883–895 show a composition bias toward polar residues; the sequence is APTEGASNSTELP. The segment covering 949-959 has biased composition (basic residues); that stretch reads NTHHARKKRHN. At Ser-1110 the chain carries Phosphoserine. Residues 1116–1128 show a composition bias toward basic and acidic residues; the sequence is PPSHADSESDHVL.

Homodimer. Interacts with PIN1 via its WW domain. This interaction is dependent on Stil mitotic phosphorylation. Interacts with CPAP. Interacts with RBM14 and this interaction interferes with the interaction of STIL with CPAP. Forms a complex with CPAP and SASS6. nteracts (via N-terminus) with CEP85; this interaction is essential for efficient centriolar targeting of STIL and subsequent PLK4 activation. In terms of processing, ubiquitinated. Phosphorylated following the activation of the mitotic checkpoint. In terms of tissue distribution, ubiquitously expressed in adult and fetal tissues. Highly expressed in hematopoietic tissues such as thymus, bone marrow and spleen.

It is found in the cytoplasm. It localises to the cytosol. The protein localises to the cytoskeleton. Its subcellular location is the microtubule organizing center. The protein resides in the centrosome. It is found in the centriole. It localises to the cell cortex. In terms of biological role, immediate-early gene. Plays an important role in embryonic development as well as in cellular growth and proliferation; its long-term silencing affects cell survival and cell cycle distribution as well as decreases CDK1 activity correlated with reduced phosphorylation of CDK1. Plays a role as a positive regulator of the sonic hedgehog pathway, acting downstream of PTCH1. Plays an important role in the regulation of centriole duplication. Required for the onset of procentriole formation and proper mitotic progression. During procentriole formation, is essential for the correct loading of SASS6 and CPAP to the base of the procentriole to initiate procentriole assembly. In complex with STIL acts as a modulator of PLK4-driven cytoskeletal rearrangements and directional cell motility. This is SCL-interrupting locus protein homolog (Stil) from Mus musculus (Mouse).